The primary structure comprises 192 residues: Pyridoxal 5'-phosphate synthase subunit PdxT (192 aa).

53–55 is a binding site for L-glutamine; it reads GES. The active-site Nucleophile is C82. L-glutamine-binding positions include R108 and 134–135; that span reads IR. Catalysis depends on charge relay system residues H170 and E172.

Belongs to the glutaminase PdxT/SNO family. In terms of assembly, in the presence of PdxS, forms a dodecamer of heterodimers. Only shows activity in the heterodimer.

The enzyme catalyses aldehydo-D-ribose 5-phosphate + D-glyceraldehyde 3-phosphate + L-glutamine = pyridoxal 5'-phosphate + L-glutamate + phosphate + 3 H2O + H(+). It catalyses the reaction L-glutamine + H2O = L-glutamate + NH4(+). It participates in cofactor biosynthesis; pyridoxal 5'-phosphate biosynthesis. In terms of biological role, catalyzes the hydrolysis of glutamine to glutamate and ammonia as part of the biosynthesis of pyridoxal 5'-phosphate. The resulting ammonia molecule is channeled to the active site of PdxS. This Methanothermobacter thermautotrophicus (strain ATCC 29096 / DSM 1053 / JCM 10044 / NBRC 100330 / Delta H) (Methanobacterium thermoautotrophicum) protein is Pyridoxal 5'-phosphate synthase subunit PdxT.